Consider the following 203-residue polypeptide: Endo-type membrane-bound lytic murein transglycosylase A (203 aa).

An N-terminal signal peptide occupies residues 1 to 15 (MKLRWFAFLVVILAG). A lipid anchor (N-palmitoyl cysteine) is attached at cysteine 16. Cysteine 16 carries S-diacylglycerol cysteine lipidation.

It belongs to the transglycosylase Slt family.

Its subcellular location is the cell outer membrane. The catalysed reaction is Endolytic cleavage of the (1-&gt;4)-beta-glycosidic linkage between N-acetylmuramic acid (MurNAc) and N-acetylglucosamine (GlcNAc) residues in peptidoglycan with concomitant formation of a 1,6-anhydrobond in the MurNAc residue.. Functionally, murein-degrading enzyme. May play a role in recycling of muropeptides during cell elongation and/or cell division. Preferentially cleaves at a distance of more than two disaccharide units from the ends of the glycan chain. The polypeptide is Endo-type membrane-bound lytic murein transglycosylase A (Salmonella paratyphi C (strain RKS4594)).